A 492-amino-acid polypeptide reads, in one-letter code: Ribose import ATP-binding protein RbsA (492 aa).

ABC transporter domains lie at 3–239 (IDMR…VGRK) and 238–492 (RKLE…TGGK). 35 to 42 (GENGAGKS) provides a ligand contact to ATP.

It belongs to the ABC transporter superfamily. Ribose importer (TC 3.A.1.2.1) family. The complex is composed of an ATP-binding protein (RbsA), two transmembrane proteins (RbsC) and a solute-binding protein (RbsB).

It localises to the cell membrane. The enzyme catalyses D-ribose(out) + ATP + H2O = D-ribose(in) + ADP + phosphate + H(+). In terms of biological role, part of the ABC transporter complex RbsABC involved in ribose import. Responsible for energy coupling to the transport system. The sequence is that of Ribose import ATP-binding protein RbsA from Streptococcus agalactiae serotype Ia (strain ATCC 27591 / A909 / CDC SS700).